We begin with the raw amino-acid sequence, 171 residues long: S-ribosylhomocysteine lyase (171 aa).

Fe cation is bound by residues His54, His58, and Cys128.

Belongs to the LuxS family. Homodimer. Fe cation is required as a cofactor.

It carries out the reaction S-(5-deoxy-D-ribos-5-yl)-L-homocysteine = (S)-4,5-dihydroxypentane-2,3-dione + L-homocysteine. Its function is as follows. Involved in the synthesis of autoinducer 2 (AI-2) which is secreted by bacteria and is used to communicate both the cell density and the metabolic potential of the environment. The regulation of gene expression in response to changes in cell density is called quorum sensing. Catalyzes the transformation of S-ribosylhomocysteine (RHC) to homocysteine (HC) and 4,5-dihydroxy-2,3-pentadione (DPD). The protein is S-ribosylhomocysteine lyase of Escherichia coli O157:H7.